The sequence spans 168 residues: Photosystem I assembly protein Ycf3 (168 aa).

TPR repeat units lie at residues 35-68 (AFTY…EIDP), 72-105 (SYIL…NPFL), and 120-153 (GEQA…TPGN).

This sequence belongs to the Ycf3 family.

It is found in the plastid. Its subcellular location is the chloroplast thylakoid membrane. In terms of biological role, essential for the assembly of the photosystem I (PSI) complex. May act as a chaperone-like factor to guide the assembly of the PSI subunits. This is Photosystem I assembly protein Ycf3 from Drimys granadensis.